A 172-amino-acid chain; its full sequence is Small ribosomal subunit protein uS5 (172 aa).

The S5 DRBM domain maps to Leu-17–Val-80.

This sequence belongs to the universal ribosomal protein uS5 family. In terms of assembly, part of the 30S ribosomal subunit. Contacts proteins S4 and S8.

In terms of biological role, with S4 and S12 plays an important role in translational accuracy. Its function is as follows. Located at the back of the 30S subunit body where it stabilizes the conformation of the head with respect to the body. This is Small ribosomal subunit protein uS5 from Polaromonas sp. (strain JS666 / ATCC BAA-500).